We begin with the raw amino-acid sequence, 377 residues long: MMTIRNSHPLIKIVNNSLVDLPAPINISTWWNFGSLLGLCLITQIMTGLFLAMHYTSDIASAFNSIVHIMRDVNNGWLIRIIHANGASLFFICLYLHTGRNIYYNSFNQISTWTMGVILMFLVMGTAFMGYVLPWGQMSFWGATVITNLLSAIPYLGNFLVQWVWGGFAVSNPTLTRFFMIHFLLPFLIIGGLLVHLLFLHQTGSNNPLGLNSNQDKIPFHPLFSYKDLVGVLIIMSGLLLLSLLSPFLLGDAENFYPANPLVTPVHIQPEWYFLFAYAILRSIPNKLGGVIALVLSVSILFILPLSSKFKMQGNQFYPFNQIMFWVFINLVIMLTWIGARPVEEPFIIMGQTLTCSYFMYFILNPMISYLWDYNLN.

Helical transmembrane passes span 33 to 53, 77 to 98, 113 to 133, and 178 to 198; these read FGSL…FLAM, WLIR…YLHT, WTMG…GYVL, and FFMI…VHLL. Residues H83 and H97 each coordinate heme b. Residues H182 and H196 each coordinate heme b. H201 lines the a ubiquinone pocket. Helical transmembrane passes span 226-246, 288-308, 320-340, and 347-367; these read YKDL…SLLS, LGGV…PLSS, FNQI…WIGA, and FIIM…LNPM.

The protein belongs to the cytochrome b family. As to quaternary structure, the main subunits of complex b-c1 are: cytochrome b, cytochrome c1 and the Rieske protein. Heme b serves as cofactor.

The protein resides in the mitochondrion inner membrane. Component of the ubiquinol-cytochrome c reductase complex (complex III or cytochrome b-c1 complex) that is part of the mitochondrial respiratory chain. The b-c1 complex mediates electron transfer from ubiquinol to cytochrome c. Contributes to the generation of a proton gradient across the mitochondrial membrane that is then used for ATP synthesis. The polypeptide is Cytochrome b (MT-CYB) (Tetrodontophora bielanensis (Giant springtail)).